Consider the following 207-residue polypeptide: ADP-ribosylation factor (207 aa).

Glycine 2 carries the N-myristoyl glycine lipid modification. Residues 32-39 (GLDGAGKT), 75-79 (DIGGQ), and 133-136 (NKID) each bind GTP.

Belongs to the small GTPase superfamily. Arf family.

The protein resides in the golgi apparatus. Its function is as follows. GTP-binding protein involved in protein trafficking; may modulate vesicle budding and uncoating within the Golgi apparatus. In Encephalitozoon cuniculi (strain GB-M1) (Microsporidian parasite), this protein is ADP-ribosylation factor (ARF-1).